The following is a 459-amino-acid chain: Argininosuccinate lyase (459 aa).

Belongs to the lyase 1 family. Argininosuccinate lyase subfamily.

It localises to the cytoplasm. The enzyme catalyses 2-(N(omega)-L-arginino)succinate = fumarate + L-arginine. It participates in amino-acid biosynthesis; L-arginine biosynthesis; L-arginine from L-ornithine and carbamoyl phosphate: step 3/3. This is Argininosuccinate lyase from Prochlorococcus marinus (strain MIT 9215).